Consider the following 105-residue polypeptide: Thioredoxin (105 aa).

Residues 1–105 (ATMTLTDANF…LEAQLADVLQ (105 aa)) form the Thioredoxin domain. A disulfide bridge links Cys29 with Cys32.

Participates in various redox reactions through the reversible oxidation of its active center dithiol to a disulfide and catalyzes dithiol-disulfide exchange reactions. The sequence is that of Thioredoxin (trxA) from Alicyclobacillus acidocaldarius subsp. acidocaldarius (Bacillus acidocaldarius).